The chain runs to 166 residues: UPF0561 protein C2orf68 homolog (166 aa).

Positions 32-49 (NQLDRDDYDKKVKQAAKE) are enriched in basic and acidic residues. The disordered stretch occupies residues 32–107 (NQLDRDDYDK…SELEPPGRQL (76 aa)). Over residues 91–101 (ESSSSGSSELE) the composition is skewed to low complexity.

Belongs to the UPF0561 family.

This chain is UPF0561 protein C2orf68 homolog, found in Mus musculus (Mouse).